Here is a 267-residue protein sequence, read N- to C-terminus: NAD kinase 2 (267 aa).

The active-site Proton acceptor is Asp52. Residues Asp52–Ala53, Asn124–Glu125, Arg151, Asp153, Thr164–Ser169, and Ala188 contribute to the NAD(+) site.

The protein belongs to the NAD kinase family. Requires a divalent metal cation as cofactor.

Its subcellular location is the cytoplasm. The enzyme catalyses NAD(+) + ATP = ADP + NADP(+) + H(+). Its function is as follows. Involved in the regulation of the intracellular balance of NAD and NADP, and is a key enzyme in the biosynthesis of NADP. Catalyzes specifically the phosphorylation on 2'-hydroxyl of the adenosine moiety of NAD to yield NADP. The polypeptide is NAD kinase 2 (Bacillus anthracis).